The following is a 157-amino-acid chain: Large ribosomal subunit protein uL22 (157 aa).

This sequence belongs to the universal ribosomal protein uL22 family. As to quaternary structure, part of the 50S ribosomal subunit.

In terms of biological role, this protein binds specifically to 23S rRNA. It makes multiple contacts with different domains of the 23S rRNA in the assembled 50S subunit and ribosome. Functionally, the globular domain of the protein is located near the polypeptide exit tunnel on the outside of the subunit, while an extended beta-hairpin is found that lines the wall of the exit tunnel in the center of the 70S ribosome. This chain is Large ribosomal subunit protein uL22, found in Staphylothermus marinus (strain ATCC 43588 / DSM 3639 / JCM 9404 / F1).